The primary structure comprises 290 residues: Enoyl-CoA hydratase, mitochondrial (290 aa).

The N-terminal 27 residues, 1–27 (MAALRVLLSCVRGPLRPPVRCPAWRPF), are a transit peptide targeting the mitochondrion. Threonine 46 bears the Phosphothreonine mark. Substrate is bound at residue 98–101 (ADIK). Position 101 is an N6-acetyllysine; alternate (lysine 101). At lysine 101 the chain carries N6-succinyllysine; alternate. Serine 114 carries the phosphoserine modification. N6-acetyllysine; alternate is present on lysine 115. Lysine 115 bears the N6-succinyllysine; alternate mark. Lysine 118 bears the N6-acetyllysine mark. Glycine 141 is a binding site for substrate. Lysine 204 is subject to N6-succinyllysine. Residue lysine 211 is modified to N6-acetyllysine.

It belongs to the enoyl-CoA hydratase/isomerase family. Homohexamer; dimer of trimers. As to expression, liver, fibroblast, muscle. Barely detectable in spleen and kidney.

It localises to the mitochondrion matrix. The catalysed reaction is a (3S)-3-hydroxyacyl-CoA = a (2E)-enoyl-CoA + H2O. The enzyme catalyses a (3E)-enoyl-CoA = a 4-saturated (2E)-enoyl-CoA. It carries out the reaction (3E)-hexenoyl-CoA = (2E)-hexenoyl-CoA. It catalyses the reaction (3S)-3-hydroxybutanoyl-CoA = (2E)-butenoyl-CoA + H2O. The catalysed reaction is 3-hydroxyisovaleryl-CoA = 3-methylbut-2-enoyl-CoA + H2O. The enzyme catalyses 3-hydroxypropanoyl-CoA = acryloyl-CoA + H2O. It carries out the reaction 3-hydroxybutanoyl-CoA = (2E)-butenoyl-CoA + H2O. It catalyses the reaction 2-methylpropenoyl-CoA + H2O = (S)-3-hydroxyisobutanoyl-CoA. The catalysed reaction is (3S)-hydroxyhexanoyl-CoA = (2E)-hexenoyl-CoA + H2O. The enzyme catalyses (3S)-hydroxydecanoyl-CoA = (2E)-decenoyl-CoA + H2O. Its pathway is lipid metabolism; fatty acid beta-oxidation. In terms of biological role, converts unsaturated trans-2-enoyl-CoA species ((2E)-enoyl-CoA) to the corresponding (3S)-3hydroxyacyl-CoA species through addition of a water molecule to the double bond. Catalyzes the hydration of medium- and short-chained fatty enoyl-CoA thioesters from 4 carbons long (C4) up to C16. Has high substrate specificity for crotonyl-CoA ((2E)-butenoyl-CoA) and moderate specificity for acryloyl-CoA, 3-methylcrotonyl-CoA (3-methyl-(2E)-butenoyl-CoA) and methacrylyl-CoA ((2E)-2-methylpropenoyl-CoA). Can bind tiglyl-CoA (2-methylcrotonoyl-CoA), but hydrates only a small amount of this substrate. Plays a key role in the beta-oxidation spiral of short- and medium-chain fatty acid oxidation. At a lower rate than the hydratase reaction, catalyzes the isomerase reaction of trans-3-enoyl-CoA species (such as (3E)-hexenoyl-CoA) to trans-2-enoyl-CoA species (such as (2E)-hexenoyl-CoA), which are subsequently hydrated to 3(S)-3-hydroxyacyl-CoA species (such as (3S)-hydroxyhexanoyl-CoA). This is Enoyl-CoA hydratase, mitochondrial from Homo sapiens (Human).